We begin with the raw amino-acid sequence, 190 residues long: Probable RNA-binding protein 18 (190 aa).

Residues 25 to 106 enclose the RRM domain; the sequence is HRLWIGNLDP…KKLVVRWAHA (82 aa). Residues 166–190 are disordered; the sequence is VYSYFKPPDKKRTTPYSRTAWKSRR.

This is Probable RNA-binding protein 18 (RBM18) from Bos taurus (Bovine).